A 61-amino-acid polypeptide reads, in one-letter code: MLILTRKIGESLLIGDDVEITVLSIRGSQVKLGVKAPKEISVHREEIYQRIKVLADENPSE.

The protein belongs to the CsrA/RsmA family. As to quaternary structure, homodimer; the beta-strands of each monomer intercalate to form a hydrophobic core, while the alpha-helices form wings that extend away from the core.

It localises to the cytoplasm. Its function is as follows. A key translational regulator that binds mRNA to regulate translation initiation and/or mRNA stability. Mediates global changes in gene expression, shifting from rapid growth to stress survival by linking envelope stress, the stringent response and the catabolite repression systems. Usually binds in the 5'-UTR; binding at or near the Shine-Dalgarno sequence prevents ribosome-binding, repressing translation, binding elsewhere in the 5'-UTR can activate translation and/or stabilize the mRNA. Its function is antagonized by small RNA(s). The sequence is that of Translational regulator CsrA from Glaesserella parasuis serovar 5 (strain SH0165) (Haemophilus parasuis).